The following is a 714-amino-acid chain: DNA ligase (714 aa).

Residues 48-52 (DADYD), 97-98 (SL), and E129 each bind NAD(+). K131 (N6-AMP-lysine intermediate) is an active-site residue. NAD(+) is bound by residues R152, E189, K307, and K331. C436, C439, C454, and C460 together coordinate Zn(2+). A BRCT domain is found at 637–714 (KQDTAVAGKT…TEDEWLALIG (78 aa)).

Belongs to the NAD-dependent DNA ligase family. LigA subfamily. Requires Mg(2+) as cofactor. Mn(2+) is required as a cofactor.

It carries out the reaction NAD(+) + (deoxyribonucleotide)n-3'-hydroxyl + 5'-phospho-(deoxyribonucleotide)m = (deoxyribonucleotide)n+m + AMP + beta-nicotinamide D-nucleotide.. Functionally, DNA ligase that catalyzes the formation of phosphodiester linkages between 5'-phosphoryl and 3'-hydroxyl groups in double-stranded DNA using NAD as a coenzyme and as the energy source for the reaction. It is essential for DNA replication and repair of damaged DNA. The sequence is that of DNA ligase from Rhodopseudomonas palustris (strain BisB5).